The following is a 543-amino-acid chain: Chaperonin GroEL 1 (543 aa).

ATP is bound by residues 29 to 32, 86 to 90, glycine 413, 479 to 481, and aspartate 495; these read TLGP, DGTTT, and NAA.

Belongs to the chaperonin (HSP60) family. As to quaternary structure, forms a cylinder of 14 subunits composed of two heptameric rings stacked back-to-back. Interacts with the co-chaperonin GroES.

It is found in the cytoplasm. The enzyme catalyses ATP + H2O + a folded polypeptide = ADP + phosphate + an unfolded polypeptide.. Together with its co-chaperonin GroES, plays an essential role in assisting protein folding. The GroEL-GroES system forms a nano-cage that allows encapsulation of the non-native substrate proteins and provides a physical environment optimized to promote and accelerate protein folding. The chain is Chaperonin GroEL 1 from Prochlorococcus marinus (strain NATL2A).